A 98-amino-acid chain; its full sequence is YcgL domain-containing protein Ping_1076 (98 aa).

Residues 1–85 (MLCAVYKSIR…PPVNHLQEHK (85 aa)) enclose the YcgL domain. Residues 75–98 (PPPVNHLQEHKDWKKKRQENKNEI) form a disordered region.

This Psychromonas ingrahamii (strain DSM 17664 / CCUG 51855 / 37) protein is YcgL domain-containing protein Ping_1076.